Consider the following 88-residue polypeptide: uncharacterized protein (88 aa).

This is an uncharacterized protein from Escherichia coli O157:H7.